The sequence spans 166 residues: Phosphopantetheine adenylyltransferase (166 aa).

Residue Thr-9 coordinates substrate. ATP is bound by residues 9–10 (TF) and His-17. Residues Lys-41, Leu-73, and Arg-87 each coordinate substrate. ATP is bound by residues 88–90 (GLR), Glu-98, and 123–129 (YQFISGT).

This sequence belongs to the bacterial CoaD family. Homohexamer. Requires Mg(2+) as cofactor.

It localises to the cytoplasm. The enzyme catalyses (R)-4'-phosphopantetheine + ATP + H(+) = 3'-dephospho-CoA + diphosphate. It functions in the pathway cofactor biosynthesis; coenzyme A biosynthesis; CoA from (R)-pantothenate: step 4/5. In terms of biological role, reversibly transfers an adenylyl group from ATP to 4'-phosphopantetheine, yielding dephospho-CoA (dPCoA) and pyrophosphate. This is Phosphopantetheine adenylyltransferase from Burkholderia mallei (strain NCTC 10229).